A 559-amino-acid polypeptide reads, in one-letter code: DNA ligase (559 aa).

ATP is bound at residue E248. K250 serves as the catalytic N6-AMP-lysine intermediate. ATP contacts are provided by R255, R270, E300, F341, R417, and K423.

This sequence belongs to the ATP-dependent DNA ligase family. Requires Mg(2+) as cofactor.

It carries out the reaction ATP + (deoxyribonucleotide)n-3'-hydroxyl + 5'-phospho-(deoxyribonucleotide)m = (deoxyribonucleotide)n+m + AMP + diphosphate.. Functionally, DNA ligase that seals nicks in double-stranded DNA during DNA replication, DNA recombination and DNA repair. The polypeptide is DNA ligase (Methanopyrus kandleri (strain AV19 / DSM 6324 / JCM 9639 / NBRC 100938)).